Consider the following 425-residue polypeptide: Dihydroorotase (425 aa).

Residues His-56 and His-58 each coordinate Zn(2+). Substrate is bound by residues 58–60 (HYR) and Asn-90. Positions 148, 175, and 228 each coordinate Zn(2+). A substrate-binding site is contributed by Asn-274. Residue Asp-301 participates in Zn(2+) binding. Asp-301 is a catalytic residue. Residues His-305 and 319 to 320 (FG) contribute to the substrate site.

The protein belongs to the metallo-dependent hydrolases superfamily. DHOase family. Class I DHOase subfamily. It depends on Zn(2+) as a cofactor.

It catalyses the reaction (S)-dihydroorotate + H2O = N-carbamoyl-L-aspartate + H(+). It participates in pyrimidine metabolism; UMP biosynthesis via de novo pathway; (S)-dihydroorotate from bicarbonate: step 3/3. Functionally, catalyzes the reversible cyclization of carbamoyl aspartate to dihydroorotate. This chain is Dihydroorotase, found in Lactobacillus delbrueckii subsp. bulgaricus (strain ATCC 11842 / DSM 20081 / BCRC 10696 / JCM 1002 / NBRC 13953 / NCIMB 11778 / NCTC 12712 / WDCM 00102 / Lb 14).